The following is a 163-amino-acid chain: Nucleotide-binding protein PMI0103 (163 aa).

Belongs to the YajQ family.

Functionally, nucleotide-binding protein. The chain is Nucleotide-binding protein PMI0103 from Proteus mirabilis (strain HI4320).